The sequence spans 403 residues: Aspartic protease PEP1 (403 aa).

The signal sequence occupies residues 1–20 (MVQISQIGAVLAVCSTLTVA). The propeptide at 21–67 (APTKGKARFNVPQVAVPMKAVHHPAVAYARALHKFGMKVPKAVSDAA) is activation peptide. The Peptidase A1 domain maps to 82–400 (YVTQVTVGQG…DTEGPRIGFA (319 aa)). The active site involves Asp98. Asn159 and Asn270 each carry an N-linked (GlcNAc...) asparagine glycan. Asp293 is a catalytic residue. Cys329 and Cys361 form a disulfide bridge.

This sequence belongs to the peptidase A1 family.

The protein localises to the secreted. The catalysed reaction is Hydrolysis of proteins with broad specificity. Generally favors hydrophobic residues in P1 and P1', but also accepts Lys in P1, which leads to activation of trypsinogen. Does not clot milk.. Secreted aspartic endopeptidase that allows assimilation of proteinaceous substrates. Can catalyze hydrolysis of the major structural proteins of basement membrane, elastin, collagen, and laminin. Thought to play a significant role in virulence. This is Aspartic protease PEP1 (PEP1) from Arthroderma benhamiae (strain ATCC MYA-4681 / CBS 112371) (Trichophyton mentagrophytes).